The following is a 248-amino-acid chain: Granulin (248 aa).

Belongs to the polyhedrin family.

In terms of biological role, component of the virus occlusion bodies, which are large proteinaceous structures, that protect the virus from the outside environment for extended periods until they are ingested by insect larvae. This is Granulin from Adoxophyes orana granulovirus (AoGV).